A 336-amino-acid chain; its full sequence is Protein SGT1 homolog (336 aa).

Position 2 is an N-acetylalanine (alanine 2). 3 TPR repeats span residues 11–44 (SQRLFQSFSDALIDGDPQAALEELTKALEQNPDD), 45–78 (AQYYCQRAYCHILLGKYRDGIADVKKSLELNPNN), and 79–112 (CTALLRKGICEYHEKDYASALETFAEGQKLDSTD). Residues 140-229 (QSKIKYDWYQ…PEAVRWEKLE (90 aa)) enclose the CS domain. Threonine 236 carries the phosphothreonine modification. The region spanning 247–336 (MYPSSSHYTR…PPDDMEWKQY (90 aa)) is the SGS domain. A Phosphoserine modification is found at serine 252. A Phosphothreonine modification is found at threonine 255. A Glycyl lysine isopeptide (Lys-Gly) (interchain with G-Cter in SUMO1); alternate cross-link involves residue lysine 266. Residue lysine 266 forms a Glycyl lysine isopeptide (Lys-Gly) (interchain with G-Cter in SUMO2); alternate linkage. The residue at position 302 (serine 302) is a Phosphoserine.

The protein belongs to the SGT1 family. In terms of assembly, probably associates with SCF (SKP1-CUL1-F-box protein) complex through interaction with SKP1. Interacts with S100A6. Interacts with HSP90. Post-translationally, phosphorylated at Ser-252 and Ser-302, dephosphorylation promotes nuclear translocation, most likely due to disruption of the SUGT1-HSP90 complex.

It is found in the cytoplasm. It localises to the nucleus. May play a role in ubiquitination and subsequent proteasomal degradation of target proteins. This chain is Protein SGT1 homolog, found in Mus musculus (Mouse).